A 214-amino-acid polypeptide reads, in one-letter code: Probable nicotinate-nucleotide adenylyltransferase (214 aa).

The protein belongs to the NadD family.

It catalyses the reaction nicotinate beta-D-ribonucleotide + ATP + H(+) = deamido-NAD(+) + diphosphate. It functions in the pathway cofactor biosynthesis; NAD(+) biosynthesis; deamido-NAD(+) from nicotinate D-ribonucleotide: step 1/1. In terms of biological role, catalyzes the reversible adenylation of nicotinate mononucleotide (NaMN) to nicotinic acid adenine dinucleotide (NaAD). The chain is Probable nicotinate-nucleotide adenylyltransferase from Buchnera aphidicola subsp. Acyrthosiphon pisum (strain Tuc7).